The following is a 117-amino-acid chain: Colipase (117 aa).

Positions 1–22 (MNIFNILLPIVVLLLVFGLTAA) are cleaved as a signal peptide. 5 disulfide bridges follow: Cys39/Cys50, Cys45/Cys61, Cys49/Cys83, Cys71/Cys91, and Cys85/Cys109.

It belongs to the colipase family. Forms a 1:1 stoichiometric complex with pancreatic lipase.

It localises to the secreted. Functionally, colipase is a cofactor of pancreatic lipase. It allows the lipase to anchor itself to the lipid-water interface. Without colipase the enzyme is washed off by bile salts, which have an inhibitory effect on the lipase. This chain is Colipase (clps), found in Xenopus tropicalis (Western clawed frog).